Consider the following 916-residue polypeptide: Oxysterol-binding protein 2 (916 aa).

3 disordered regions span residues 1 to 20, 34 to 121, and 139 to 163; these read MGKA…SRGL, TAAP…PFTK, and PESG…TPLG. Over residues 49–58 the composition is skewed to pro residues; it reads EPKPQPQPVP. Residues 79-92 show a composition bias toward low complexity; it reads RSEPVSETTSEPEP. Positions 99-113 are enriched in polar residues; sequence ELLQGSRPGSESSSG. Over residues 144–155 the composition is skewed to low complexity; sequence LPALKPLPLLRP. Residues 182–274 enclose the PH domain; that stretch reads LDSFEGWLLK…WITALELAKA (93 aa). Disordered stretches follow at residues 282-301 and 417-448; these read THSD…DKSE and FHSA…EEDE. Ser-287 carries the post-translational modification Phosphoserine. Position 763 is a phosphoserine (Ser-763). A disordered region spans residues 813–842; the sequence is EGVAPTDSRLRPDQRLMEKGRWDEANTEKQ.

Belongs to the OSBP family. In terms of assembly, interacts with CCDC159. As to expression, expressed mainly in retina, testis, and fetal liver.

The protein localises to the membrane. It is found in the cytoplasmic vesicle. Its subcellular location is the secretory vesicle. It localises to the acrosome. Its function is as follows. Binds 7-ketocholesterol. Acts during spermatid development where its function is required prior to the removal of cytoplasm from the sperm head. The sequence is that of Oxysterol-binding protein 2 (OSBP2) from Homo sapiens (Human).